A 153-amino-acid chain; its full sequence is Endoribonuclease YbeY (153 aa).

3 residues coordinate Zn(2+): His-113, His-117, and His-123.

This sequence belongs to the endoribonuclease YbeY family. It depends on Zn(2+) as a cofactor.

It is found in the cytoplasm. In terms of biological role, single strand-specific metallo-endoribonuclease involved in late-stage 70S ribosome quality control and in maturation of the 3' terminus of the 16S rRNA. The chain is Endoribonuclease YbeY from Aliivibrio fischeri (strain MJ11) (Vibrio fischeri).